A 279-amino-acid chain; its full sequence is NAD kinase (279 aa).

D57 serves as the catalytic Proton acceptor. NAD(+)-binding positions include 57-58 (DG), 133-134 (NE), R159, D161, 172-177 (TAYNKS), and A196.

Belongs to the NAD kinase family. Requires a divalent metal cation as cofactor.

It is found in the cytoplasm. The catalysed reaction is NAD(+) + ATP = ADP + NADP(+) + H(+). In terms of biological role, involved in the regulation of the intracellular balance of NAD and NADP, and is a key enzyme in the biosynthesis of NADP. Catalyzes specifically the phosphorylation on 2'-hydroxyl of the adenosine moiety of NAD to yield NADP. This chain is NAD kinase, found in Streptococcus thermophilus (strain CNRZ 1066).